Reading from the N-terminus, the 213-residue chain is Holliday junction branch migration complex subunit RuvA (213 aa).

The interval 1 to 63 (MIGMLTGRVA…EDAFKLYGFL (63 aa)) is domain I. The segment at 64–142 (DDIDRAWFVH…PTGRSFSIGL (79 aa)) is domain II. The tract at residues 143-160 (PVHSDDGTTGGAPVAPAG) is flexible linker. Positions 161-213 (GDSLAREDAVSALVNLGYNESQARQAVAKILRDADSEAPLGDVIRLSLKELAA) are domain III.

Belongs to the RuvA family. As to quaternary structure, homotetramer. Forms an RuvA(8)-RuvB(12)-Holliday junction (HJ) complex. HJ DNA is sandwiched between 2 RuvA tetramers; dsDNA enters through RuvA and exits via RuvB. An RuvB hexamer assembles on each DNA strand where it exits the tetramer. Each RuvB hexamer is contacted by two RuvA subunits (via domain III) on 2 adjacent RuvB subunits; this complex drives branch migration. In the full resolvosome a probable DNA-RuvA(4)-RuvB(12)-RuvC(2) complex forms which resolves the HJ.

The protein localises to the cytoplasm. In terms of biological role, the RuvA-RuvB-RuvC complex processes Holliday junction (HJ) DNA during genetic recombination and DNA repair, while the RuvA-RuvB complex plays an important role in the rescue of blocked DNA replication forks via replication fork reversal (RFR). RuvA specifically binds to HJ cruciform DNA, conferring on it an open structure. The RuvB hexamer acts as an ATP-dependent pump, pulling dsDNA into and through the RuvAB complex. HJ branch migration allows RuvC to scan DNA until it finds its consensus sequence, where it cleaves and resolves the cruciform DNA. This Maricaulis maris (strain MCS10) (Caulobacter maris) protein is Holliday junction branch migration complex subunit RuvA.